We begin with the raw amino-acid sequence, 796 residues long: Lon protease 2 (796 aa).

Positions 9–206 constitute a Lon N-terminal domain; the sequence is LPIVILKENV…KLIVNLSIEI (198 aa). 352-359 is a binding site for ATP; the sequence is GPPGIGKT. The 180-residue stretch at 617 to 796 folds into the Lon proteolytic domain; the sequence is IDSSGFVYGL…EEVFDYLNII (180 aa). Catalysis depends on residues Ser-702 and Lys-745.

This sequence belongs to the peptidase S16 family. Homohexamer. Organized in a ring with a central cavity.

The protein resides in the cytoplasm. The catalysed reaction is Hydrolysis of proteins in presence of ATP.. ATP-dependent serine protease that mediates the selective degradation of mutant and abnormal proteins as well as certain short-lived regulatory proteins. Required for cellular homeostasis and for survival from DNA damage and developmental changes induced by stress. Degrades polypeptides processively to yield small peptide fragments that are 5 to 10 amino acids long. Binds to DNA in a double-stranded, site-specific manner. This is Lon protease 2 (lon2) from Borreliella burgdorferi (strain ATCC 35210 / DSM 4680 / CIP 102532 / B31) (Borrelia burgdorferi).